A 410-amino-acid chain; its full sequence is Multifunctional CCA protein (410 aa).

Positions 8 and 11 each coordinate ATP. Residues Gly-8 and Arg-11 each contribute to the CTP site. The Mg(2+) site is built by Glu-21 and Asp-23. ATP-binding residues include Arg-91, Arg-137, and Arg-140. CTP contacts are provided by Arg-91, Arg-137, and Arg-140. The 102-residue stretch at 228 to 329 folds into the HD domain; it reads TLLHQFLCLK…WKLFKSLDIL (102 aa).

This sequence belongs to the tRNA nucleotidyltransferase/poly(A) polymerase family. Bacterial CCA-adding enzyme type 1 subfamily. In terms of assembly, monomer. Can also form homodimers and oligomers. Mg(2+) is required as a cofactor. It depends on Ni(2+) as a cofactor.

It catalyses the reaction a tRNA precursor + 2 CTP + ATP = a tRNA with a 3' CCA end + 3 diphosphate. It carries out the reaction a tRNA with a 3' CCA end + 2 CTP + ATP = a tRNA with a 3' CCACCA end + 3 diphosphate. In terms of biological role, catalyzes the addition and repair of the essential 3'-terminal CCA sequence in tRNAs without using a nucleic acid template. Adds these three nucleotides in the order of C, C, and A to the tRNA nucleotide-73, using CTP and ATP as substrates and producing inorganic pyrophosphate. tRNA 3'-terminal CCA addition is required both for tRNA processing and repair. Also involved in tRNA surveillance by mediating tandem CCA addition to generate a CCACCA at the 3' terminus of unstable tRNAs. While stable tRNAs receive only 3'-terminal CCA, unstable tRNAs are marked with CCACCA and rapidly degraded. The chain is Multifunctional CCA protein from Alcanivorax borkumensis (strain ATCC 700651 / DSM 11573 / NCIMB 13689 / SK2).